Consider the following 325-residue polypeptide: NADH-quinone oxidoreductase subunit H (325 aa).

A run of 8 helical transmembrane segments spans residues 11 to 31, 81 to 101, 114 to 134, 154 to 174, 186 to 206, 237 to 257, 265 to 285, and 304 to 324; these read VIIA…CGAF, VIFT…MAIV, IGLL…LFAG, LSYE…AGSF, LWNV…GVAV, FFVG…TLFF, LPPV…FILI, and VCLP…LYTA.

The protein belongs to the complex I subunit 1 family. NDH-1 is composed of 13 different subunits. Subunits NuoA, H, J, K, L, M, N constitute the membrane sector of the complex.

It is found in the cell inner membrane. It carries out the reaction a quinone + NADH + 5 H(+)(in) = a quinol + NAD(+) + 4 H(+)(out). NDH-1 shuttles electrons from NADH, via FMN and iron-sulfur (Fe-S) centers, to quinones in the respiratory chain. The immediate electron acceptor for the enzyme in this species is believed to be ubiquinone. Couples the redox reaction to proton translocation (for every two electrons transferred, four hydrogen ions are translocated across the cytoplasmic membrane), and thus conserves the redox energy in a proton gradient. This subunit may bind ubiquinone. This is NADH-quinone oxidoreductase subunit H from Erwinia tasmaniensis (strain DSM 17950 / CFBP 7177 / CIP 109463 / NCPPB 4357 / Et1/99).